Here is a 129-residue protein sequence, read N- to C-terminus: Phosphoribosyl-AMP cyclohydrolase (129 aa).

Residue D76 coordinates Mg(2+). C77 provides a ligand contact to Zn(2+). Positions 78 and 80 each coordinate Mg(2+). Zn(2+) contacts are provided by C97 and C104.

The protein belongs to the PRA-CH family. Homodimer. Mg(2+) is required as a cofactor. It depends on Zn(2+) as a cofactor.

It localises to the cytoplasm. It carries out the reaction 1-(5-phospho-beta-D-ribosyl)-5'-AMP + H2O = 1-(5-phospho-beta-D-ribosyl)-5-[(5-phospho-beta-D-ribosylamino)methylideneamino]imidazole-4-carboxamide. It participates in amino-acid biosynthesis; L-histidine biosynthesis; L-histidine from 5-phospho-alpha-D-ribose 1-diphosphate: step 3/9. Its function is as follows. Catalyzes the hydrolysis of the adenine ring of phosphoribosyl-AMP. This chain is Phosphoribosyl-AMP cyclohydrolase, found in Polaromonas naphthalenivorans (strain CJ2).